The primary structure comprises 35 residues: Augerpeptide hheTx4 (35 aa).

Contains 4 disulfide bonds. Expressed by the venom duct.

It is found in the secreted. The sequence is that of Augerpeptide hheTx4 from Hastula hectica (Sea snail).